Reading from the N-terminus, the 2002-residue chain is Methylcytosine dioxygenase TET2 (2002 aa).

Positions 1 to 11 (MEQDRTNHVEG) are enriched in basic and acidic residues. The tract at residues 1 to 22 (MEQDRTNHVEGNRLSPFLIPSP) is disordered. 3 positions are modified to phosphoserine: serine 15, serine 75, and serine 99. A compositionally biased stretch (basic and acidic residues) spans 113-124 (KQDQKANGERRN). Disordered regions lie at residues 113–154 (KQDQ…VSSV), 266–287 (HPSH…LPPK), 349–368 (GEEF…GSSE), 390–488 (DSFS…VNRN), 703–748 (LNQQ…QQKL), 930–949 (VPDQ…TQKH), and 1075–1095 (DSHT…PTKR). Composition is skewed to polar residues over residues 126-143 (GVSQ…NVSD) and 267-283 (PSHT…SNSE). The segment covering 397-416 (TPPPPSQLLLSPPPPLPQVP) has biased composition (pro residues). 2 stretches are compositionally biased toward polar residues: residues 479–488 (RPQNNCVNRN) and 703–718 (LNQQ…NSHL). A compositionally biased stretch (low complexity) spans 731 to 748 (QPSQSSHLPQNQQQQQKL). Polar residues-rich tracts occupy residues 935–944 (GSHTQTPPQK) and 1081–1095 (LEQQ…PTKR). Residues serine 1107 and serine 1109 each carry the phosphoserine modification. The Zn(2+) site is built by cysteine 1133, cysteine 1135, cysteine 1193, histidine 1219, and cysteine 1221. Arginine 1261 provides a ligand contact to 2-oxoglutarate. Zn(2+) is bound by residues cysteine 1271, cysteine 1273, cysteine 1289, and cysteine 1298. Residues 1290–1303 (SWSMYYNGCKFARS) form an interaction with DNA region. Residue lysine 1299 forms a Glycyl lysine isopeptide (Lys-Gly) (interchain with G-Cter in ubiquitin) linkage. Cysteine 1358 is a Zn(2+) binding site. Cysteine 1374 contacts 2-oxoglutarate. Histidine 1380 is a Zn(2+) binding site. Residues histidine 1382 and aspartate 1384 each coordinate Fe cation. Residue asparagine 1387 coordinates substrate. Histidine 1416 lines the 2-oxoglutarate pocket. Disordered regions lie at residues 1475–1507 (AAEK…NASQ) and 1521–1587 (VMQQ…HTSD). Positions 1477–1487 (EKLSSLENSSN) are enriched in low complexity. Residues 1496-1507 (PSRTKQTENASQ) are compositionally biased toward polar residues. Composition is skewed to low complexity over residues 1523 to 1532 (QQSQQPQPLQ) and 1539 to 1551 (QQQQ…QPHH). Over residues 1554–1568 (TESVNSYSASGSTNP) the composition is skewed to polar residues. Arginine 1682 carries the post-translational modification Asymmetric dimethylarginine. A Fe cation-binding site is contributed by histidine 1881. 1896-1898 (RIS) serves as a coordination point for 2-oxoglutarate. 1902–1904 (YQH) provides a ligand contact to substrate. A Zn(2+)-binding site is contributed by histidine 1912. The segment at 1932–1961 (CEKYGPDYVPQKSHGKKVKREPAEPHETSE) is disordered. The segment covering 1951-1960 (REPAEPHETS) has biased composition (basic and acidic residues).

It belongs to the TET family. Interacts with HCFC1. Interacts with OGT. Interacts with PROSER1; this interaction mediates TET2 O-GlcNAcylation and stability by promoting the interaction between OGT and TET2. Directly interacts (via C-terminus) with the DCAF1 component of the CRL4(VprBP) E3 ubiquitin-protein ligase complex. Fe(2+) is required as a cofactor. The cofactor is Zn(2+). In terms of processing, may be glycosylated. It is unclear whether interaction with OGT leads to GlcNAcylation. According to a report, it is not GlcNAcylated by OGT. In contrast, another group reports GlcNAcylation by OGT in mouse ortholog. Post-translationally, monoubiquitinated at Lys-1299 by the DCX (DDB1-CUL4-X-box) E3 ubiquitin-protein ligase complex called CRL4(VprBP) or CUL4A-RBX1-DDB1-DCAF1/VPRBP complex; this modification promotes binding to DNA. Acetylated. Deacetylase HDAC6 acts as a valine sensor by binding to valine through its primate-specific SE14 repeat region and deacetylates TET2 following valine deprivation which promotes TET2-dependent DNA demethylation. In terms of tissue distribution, broadly expressed. Highly expressed in hematopoietic cells; highest expression observed in granulocytes. Expression is reduced in granulocytes from peripheral blood of patients affected by myelodysplastic syndromes.

The protein localises to the nucleus. Its subcellular location is the chromosome. It catalyses the reaction a 5-methyl-2'-deoxycytidine in DNA + 2-oxoglutarate + O2 = a 5-hydroxymethyl-2'-deoxycytidine in DNA + succinate + CO2. The enzyme catalyses a 5-hydroxymethyl-2'-deoxycytidine in DNA + 2-oxoglutarate + O2 = a 5-formyl-2'-deoxycytidine in DNA + succinate + CO2 + H2O. The catalysed reaction is a 5-formyl-2'-deoxycytidine in DNA + 2-oxoglutarate + O2 = a 5-carboxyl-2'-deoxycytidine in DNA + succinate + CO2 + H(+). Dioxygenase that catalyzes the conversion of the modified genomic base 5-methylcytosine (5mC) into 5-hydroxymethylcytosine (5hmC) and plays a key role in active DNA demethylation. Has a preference for 5-hydroxymethylcytosine in CpG motifs. Also mediates subsequent conversion of 5hmC into 5-formylcytosine (5fC), and conversion of 5fC to 5-carboxylcytosine (5caC). Conversion of 5mC into 5hmC, 5fC and 5caC probably constitutes the first step in cytosine demethylation. Methylation at the C5 position of cytosine bases is an epigenetic modification of the mammalian genome which plays an important role in transcriptional regulation. In addition to its role in DNA demethylation, also involved in the recruitment of the O-GlcNAc transferase OGT to CpG-rich transcription start sites of active genes, thereby promoting histone H2B GlcNAcylation by OGT. This is Methylcytosine dioxygenase TET2 (TET2) from Homo sapiens (Human).